The sequence spans 237 residues: tRNA (guanine-N(7)-)-methyltransferase (237 aa).

The S-adenosyl-L-methionine site is built by Glu67, Glu92, Asp119, and Asp141. Residue Asp141 is part of the active site. Residues Lys145, Asp177, and 214 to 217 contribute to the substrate site; that span reads TRYE.

The protein belongs to the class I-like SAM-binding methyltransferase superfamily. TrmB family.

The enzyme catalyses guanosine(46) in tRNA + S-adenosyl-L-methionine = N(7)-methylguanosine(46) in tRNA + S-adenosyl-L-homocysteine. Its pathway is tRNA modification; N(7)-methylguanine-tRNA biosynthesis. Functionally, catalyzes the formation of N(7)-methylguanine at position 46 (m7G46) in tRNA. The chain is tRNA (guanine-N(7)-)-methyltransferase from Ruegeria pomeroyi (strain ATCC 700808 / DSM 15171 / DSS-3) (Silicibacter pomeroyi).